A 31-amino-acid chain; its full sequence is Cytochrome b6-f complex subunit 6 (31 aa).

A helical membrane pass occupies residues 4 to 26; it reads LTSYFGFLLAALTITSALFIGLS.

It belongs to the PetL family. In terms of assembly, the 4 large subunits of the cytochrome b6-f complex are cytochrome b6, subunit IV (17 kDa polypeptide, PetD), cytochrome f and the Rieske protein, while the 4 small subunits are PetG, PetL, PetM and PetN. The complex functions as a dimer.

It is found in the plastid. The protein localises to the chloroplast thylakoid membrane. Functionally, component of the cytochrome b6-f complex, which mediates electron transfer between photosystem II (PSII) and photosystem I (PSI), cyclic electron flow around PSI, and state transitions. PetL is important for photoautotrophic growth as well as for electron transfer efficiency and stability of the cytochrome b6-f complex. In Aethionema grandiflorum (Persian stone-cress), this protein is Cytochrome b6-f complex subunit 6.